A 344-amino-acid chain; its full sequence is Putative F-box/kelch-repeat protein At1g19930 (344 aa).

The region spanning 8–54 (TELIFSLPNDLLVNILARVSRLDYPILSLVSKRFSSVLTLPELYQTR) is the F-box domain. 4 Kelch repeats span residues 122 to 168 (NIYN…LLDG), 170 to 195 (IYVTGGCRLTFHGCGDQTDNVVVDGK), 196 to 241 (LHSC…YYYY), and 243 to 276 (NENIKWYDTKVRSWRTLNGLKTLPRFARYANVRL).

In Arabidopsis thaliana (Mouse-ear cress), this protein is Putative F-box/kelch-repeat protein At1g19930.